A 1403-amino-acid polypeptide reads, in one-letter code: DNA-directed RNA polymerase subunit beta' (1403 aa).

Zn(2+) contacts are provided by Cys71, Cys73, Cys86, and Cys89. Asp462, Asp464, and Asp466 together coordinate Mg(2+). Residues Cys811, Cys885, Cys892, and Cys895 each coordinate Zn(2+).

Belongs to the RNA polymerase beta' chain family. As to quaternary structure, the RNAP catalytic core consists of 2 alpha, 1 beta, 1 beta' and 1 omega subunit. When a sigma factor is associated with the core the holoenzyme is formed, which can initiate transcription. The cofactor is Mg(2+). It depends on Zn(2+) as a cofactor.

The catalysed reaction is RNA(n) + a ribonucleoside 5'-triphosphate = RNA(n+1) + diphosphate. Functionally, DNA-dependent RNA polymerase catalyzes the transcription of DNA into RNA using the four ribonucleoside triphosphates as substrates. This chain is DNA-directed RNA polymerase subunit beta', found in Bartonella tribocorum (strain CIP 105476 / IBS 506).